Consider the following 150-residue polypeptide: MAIRSIRKYGDELLRKKSRKVEKIDKRLLTLIDDMFETMYNADGVGLAAPQVGILKRLVVIDVGEGPVVLINPEILETSGKAVDVEGCLSIPERQGEVERPTYVKAKALNEKGEEIVIEAEDLFARAICHETDHLNGVLFVDKLAESEGN.

Fe cation contacts are provided by Cys88 and His130. The active site involves Glu131. His134 is a Fe cation binding site.

Belongs to the polypeptide deformylase family. Fe(2+) serves as cofactor.

The enzyme catalyses N-terminal N-formyl-L-methionyl-[peptide] + H2O = N-terminal L-methionyl-[peptide] + formate. Removes the formyl group from the N-terminal Met of newly synthesized proteins. Requires at least a dipeptide for an efficient rate of reaction. N-terminal L-methionine is a prerequisite for activity but the enzyme has broad specificity at other positions. The chain is Peptide deformylase 1 from Clostridium acetobutylicum (strain ATCC 824 / DSM 792 / JCM 1419 / IAM 19013 / LMG 5710 / NBRC 13948 / NRRL B-527 / VKM B-1787 / 2291 / W).